An 81-amino-acid chain; its full sequence is Defensin-like protein 313 (81 aa).

An N-terminal signal peptide occupies residues Met-1–Ala-32. 3 disulfide bridges follow: Cys-34–Cys-63, Cys-45–Cys-74, and Cys-49–Cys-76.

The protein belongs to the DEFL family.

The protein resides in the secreted. This chain is Defensin-like protein 313, found in Arabidopsis thaliana (Mouse-ear cress).